Consider the following 90-residue polypeptide: Cell division topological specificity factor (90 aa).

It belongs to the MinE family.

Functionally, prevents the cell division inhibition by proteins MinC and MinD at internal division sites while permitting inhibition at polar sites. This ensures cell division at the proper site by restricting the formation of a division septum at the midpoint of the long axis of the cell. This is Cell division topological specificity factor from Francisella tularensis subsp. tularensis (strain FSC 198).